Here is a 430-residue protein sequence, read N- to C-terminus: ATP-dependent RNA helicase RhlB (430 aa).

The Q motif motif lies at 9-37 (QKFSDFALHPQVIEALESKGFHNCTPIQA). Residues 40-219 (LPLALSGRDV…FEQMNNAEYV (180 aa)) enclose the Helicase ATP-binding domain. 53-60 (AQTGTGKT) lines the ATP pocket. The short motif at 165–168 (DEAD) is the DEAD box element. The 146-residue stretch at 245 to 390 (RLLQTLLEEE…VSKYNSDALM (146 aa)) folds into the Helicase C-terminal domain. Residues 392 to 430 (DLPAPKRLTRPPRSNNGPRRHNNAPRRSGAPRNNRKRAD) are disordered.

Belongs to the DEAD box helicase family. RhlB subfamily. Component of the RNA degradosome, which is a multiprotein complex involved in RNA processing and mRNA degradation.

It localises to the cytoplasm. It carries out the reaction ATP + H2O = ADP + phosphate + H(+). DEAD-box RNA helicase involved in RNA degradation. Has RNA-dependent ATPase activity and unwinds double-stranded RNA. This Pectobacterium carotovorum subsp. carotovorum (strain PC1) protein is ATP-dependent RNA helicase RhlB.